The primary structure comprises 556 residues: Arginine--tRNA ligase (556 aa).

Positions 132-142 (ANPTGNLHLGH) match the 'HIGH' region motif.

This sequence belongs to the class-I aminoacyl-tRNA synthetase family. In terms of assembly, monomer.

It localises to the cytoplasm. The catalysed reaction is tRNA(Arg) + L-arginine + ATP = L-arginyl-tRNA(Arg) + AMP + diphosphate. This Bacillus licheniformis (strain ATCC 14580 / DSM 13 / JCM 2505 / CCUG 7422 / NBRC 12200 / NCIMB 9375 / NCTC 10341 / NRRL NRS-1264 / Gibson 46) protein is Arginine--tRNA ligase.